Reading from the N-terminus, the 1133-residue chain is Protein TOPLESS-RELATED PROTEIN 2 (1133 aa).

Residues 4-36 form the LisH domain; it reads LSRELVFLILQFLDEEKFKETVHKLEQESAFYF. One can recognise a CTLH domain in the interval 34–92; that stretch reads FYFNMKHFEDLVQGGEWDEVEKYLSGFTKVEDNRYSMKIFFEIRKQKYLEALDRHDRAK. 12 WD repeats span residues 344–384, 451–492, 495–536, 539–582, 586–625, 630–669, 771–810, 838–876, 879–919, 922–961, 970–1011, and 1015–1054; these read NQGS…RIAH, AHIG…KQYT, GHEA…SRVD, APGH…IKRT, FRKR…ILTT, GGLP…RLLR, ATSS…RNPN, NPEE…VMTT, APPP…VKSK, GHSK…KKKS, RSGA…RSWS, and ALPA…LRCR. The segment at 1102-1133 is disordered; it reads DSDPKWGVAPPQDNGTHPTISAAPAAANKPEV.

In terms of assembly, tetramer. Interacts with D53, probably via the EAR motifs. Binds to AP2-1/TOE1, AP2-3/SNB and AP2-2/IDS1. Interacts with WOX1. Interacts with MOF1. In terms of tissue distribution, expressed in stems and panicles. Detected in roots, seeds, leaves and sheath. Expressed in the meristem and lateral organ primordia.

The protein resides in the nucleus. Functionally, transcriptional corepressor involved in branch formation regulation, presumably by suppressing primary branch formation and promoting secondary branch formation. Required for the cell elongation in the first internode and pollen development. Probable downstream regulator of strigolactones signaling important in axillary meristem maintenance. Acts in auxin signaling and is associated with the regulation of histone deacetylation. Essential for the function of miR172 microRNA and its target genes in regulating panicle development. This chain is Protein TOPLESS-RELATED PROTEIN 2, found in Oryza sativa subsp. japonica (Rice).